Reading from the N-terminus, the 875-residue chain is DNA topoisomerase 3-beta (875 aa).

The Toprim domain occupies 3-153 (SVLMVAEKPS…QVTYRAHFSA (151 aa)). Positions 170 to 589 (NENEAKSVDA…AIKIFKLKFM (420 aa)) constitute a Topo IA-type catalytic domain. The active-site O-(5'-phospho-DNA)-tyrosine intermediate is the tyrosine 332. The interval 371–391 (QTPRKGKDAGDHPPITPMKLG) is disordered.

It belongs to the type IA topoisomerase family.

The enzyme catalyses ATP-independent breakage of single-stranded DNA, followed by passage and rejoining.. Releases the supercoiling and torsional tension of DNA introduced during the DNA replication and transcription by transiently cleaving and rejoining one strand of the DNA duplex. Introduces a single-strand break via transesterification at a target site in duplex DNA. The scissile phosphodiester is attacked by the catalytic tyrosine of the enzyme, resulting in the formation of a DNA-(5'-phosphotyrosyl)-enzyme intermediate and the expulsion of a 3'-OH DNA strand. The free DNA strand than undergoes passage around the unbroken strand thus removing DNA supercoils. Finally, in the religation step, the DNA 3'-OH attacks the covalent intermediate to expel the active-site tyrosine and restore the DNA phosphodiester backbone. Weakly relaxes negative supercoils and displays a distinct preference for binding single-stranded DNA. In Drosophila melanogaster (Fruit fly), this protein is DNA topoisomerase 3-beta (Top3beta).